Reading from the N-terminus, the 126-residue chain is Major sperm protein 3 (126 aa).

Ala-2 bears the N-acetylalanine mark. Residues 8–125 (DIATMPAQKV…RRKNLPIEYN (118 aa)) enclose the MSP domain.

Sperm.

Its subcellular location is the cell projection. The protein resides in the pseudopodium. It is found in the cytoplasm. The protein localises to the cytoskeleton. Functionally, central component in molecular interactions underlying sperm crawling. Forms an extensive filament system that extends from sperm villipoda, along the leading edge of the pseudopod. The sequence is that of Major sperm protein 3 (MSP-3) from Globodera rostochiensis (Golden nematode worm).